The primary structure comprises 967 residues: Leucine--tRNA ligase (967 aa).

The 'HIGH' region motif lies at 43 to 53 (PYLSGHLHVGH). Positions 650 to 654 (KMSKS) match the 'KMSKS' region motif. Residue lysine 653 participates in ATP binding.

This sequence belongs to the class-I aminoacyl-tRNA synthetase family.

It is found in the cytoplasm. The catalysed reaction is tRNA(Leu) + L-leucine + ATP = L-leucyl-tRNA(Leu) + AMP + diphosphate. The polypeptide is Leucine--tRNA ligase (Thermococcus kodakarensis (strain ATCC BAA-918 / JCM 12380 / KOD1) (Pyrococcus kodakaraensis (strain KOD1))).